The sequence spans 761 residues: NADP-dependent malic enzyme (761 aa).

The tract at residues 1–437 is malic enzyme; sequence MPGIDKTDRA…QLSARRDPIA (437 aa). The active-site Proton donor is Y49. The Proton acceptor role is filled by K104. E146, D147, and D172 together coordinate a divalent metal cation. NADP(+)-binding positions include 205-208, N297, and N329; that span reads AGAA. Residues 438–761 are phosphate acetyltransferase; that stretch reads STLQRIVERV…AAIAAYNAGT (324 aa).

It in the N-terminal section; belongs to the malic enzymes family. This sequence in the C-terminal section; belongs to the phosphate acetyltransferase and butyryltransferase family. As to quaternary structure, homooctamer. Mg(2+) is required as a cofactor. Requires Mn(2+) as cofactor.

The catalysed reaction is (S)-malate + NADP(+) = pyruvate + CO2 + NADPH. The enzyme catalyses oxaloacetate + H(+) = pyruvate + CO2. This chain is NADP-dependent malic enzyme (tme), found in Rhizobium meliloti (strain 1021) (Ensifer meliloti).